The primary structure comprises 105 residues: UPF0235 protein Mchl_2407 (105 aa).

This sequence belongs to the UPF0235 family.

In Methylorubrum extorquens (strain CM4 / NCIMB 13688) (Methylobacterium extorquens), this protein is UPF0235 protein Mchl_2407.